A 795-amino-acid chain; its full sequence is Mitochondrial intermediate peptidase (795 aa).

The N-terminal 22 residues, Met-1–Asn-22, are a transit peptide targeting the mitochondrion. Position 561 (His-561) interacts with Zn(2+). Glu-562 is an active-site residue. Zn(2+) contacts are provided by His-565 and His-568.

The protein belongs to the peptidase M3 family. Zn(2+) is required as a cofactor.

It localises to the mitochondrion matrix. The enzyme catalyses Release of an N-terminal octapeptide as second stage of processing of some proteins imported into the mitochondrion.. Cleaves proteins, imported into the mitochondrion, to their mature size. While most mitochondrial precursor proteins are processed to the mature form in one step by mitochondrial processing peptidase (MPP), the sequential cleavage by MIP of an octapeptide after initial processing by MPP is a required step for a subgroup of nuclear-encoded precursor proteins destined for the matrix or the inner membrane. The sequence is that of Mitochondrial intermediate peptidase (OCT1) from Coccidioides immitis (strain RS) (Valley fever fungus).